The primary structure comprises 142 residues: Large ribosomal subunit protein uL22c (142 aa).

This sequence belongs to the universal ribosomal protein uL22 family. Part of the 50S ribosomal subunit.

It localises to the plastid. It is found in the chloroplast. Its function is as follows. This protein binds specifically to 23S rRNA. In terms of biological role, the globular domain of the protein is located near the polypeptide exit tunnel on the outside of the subunit, while an extended beta-hairpin is found that lines the wall of the exit tunnel in the center of the 70S ribosome. This is Large ribosomal subunit protein uL22c (rpl22) from Picea abies (Norway spruce).